The sequence spans 294 residues: Protease HtpX homolog 2 (294 aa).

Helical transmembrane passes span 15 to 35 (MLFTMFLLAAVYLFFLAFLSY) and 37 to 57 (GTPPVFMLLFVGAFMGIQYFY). H140 lines the Zn(2+) pocket. Residue E141 is part of the active site. H144 is a Zn(2+) binding site. 2 consecutive transmembrane segments (helical) span residues 151 to 171 (AVLTIASFISTIAFYIVRYSL) and 185 to 205 (GGILLVWLVSIAVWVVSFLLI). E213 lines the Zn(2+) pocket.

Belongs to the peptidase M48B family. Requires Zn(2+) as cofactor.

It localises to the cell membrane. This chain is Protease HtpX homolog 2, found in Methanosarcina acetivorans (strain ATCC 35395 / DSM 2834 / JCM 12185 / C2A).